A 433-amino-acid polypeptide reads, in one-letter code: Cell division protein FtsZ homolog 1, chloroplastic (433 aa).

A chloroplast-targeting transit peptide spans 1–66; sequence MAIIPLAQLN…TRSKSMRLRC (66 aa). S67 is modified (N-acetylserine). GTP-binding positions include 83 to 87, 170 to 172, E201, R205, and D249; these read GGGNN and GTG. The segment at 399 to 433 is disordered; it reads GSSGQQENKGMSLPHQKQSPSTISTKSSSPRRLFF. Residues 414–433 show a composition bias toward low complexity; the sequence is QKQSPSTISTKSSSPRRLFF.

Belongs to the FtsZ family. Aggregates to form a contractile ring-like structure; contraction of the ring was accompanied by an increase in the filament turnover rate. This aggregation is regulated in midchloroplast stroma by MIND1 (repressor) and MINE1 (promoter). Self-interacts and binds to FTSZ2-1 in heteromers to form two morphologically distinct types of filaments, termed type-I (smooth filaments) and type-II (rough filaments), in a GTP-dependent manner. Interacts with ARC3. Part of a complex made of ARC3, ARC6, FTSZ1 and FTSZ2. In terms of tissue distribution, in pollen grain, restricted to plastids of vegetative cells. Also present in pollen tubes plastids.

The protein resides in the plastid. It is found in the chloroplast stroma. Its subcellular location is the chloroplast thylakoid membrane. Its function is as follows. Exhibits GTPase activity. Component of the plastid division machinery that forms a contractile ring at the division site. Required for plastid division in a dose-dependent manner. Involved in epidermal plastids division in a MINE1-dependent manner. Involved in blue light-induced chloroplast movements. May regulate thylakoid development. In the vegetative shoot apex, at the shoot apical meristem (SAM), where the proplastid-to-chloroplast transition takes place, contributes equally with FTSZ2-1 in the L2 layer to plastid division. In Arabidopsis thaliana (Mouse-ear cress), this protein is Cell division protein FtsZ homolog 1, chloroplastic.